The primary structure comprises 714 residues: Forkhead box protein P2 (714 aa).

The segment covering 1 to 28 (MMQESATETISNSSMNQNGMSTLSSQLD) has biased composition (polar residues). Disordered regions lie at residues 1-45 (MMQE…SEVS) and 284-338 (KHGG…TGAS). Residues 291-304 (TTNNSSSTTSSTTS) are compositionally biased toward low complexity. Polar residues predominate over residues 314–323 (SIVNGQSSVL). Basic and acidic residues predominate over residues 325 to 336 (ARRDSSSHEETG). A C2H2-type zinc finger spans residues 345-370 (GVCKWPGCESICEDFGQFLKHLNNEH). The segment at 387–408 (VQQLEIQLSKERERLQAMMTHL) is leucine-zipper. The segment at 421–425 (PLNLV) is CTBP1-binding. Over residues 437–458 (TSPQSLPQTPTTPTAPVTPITQ) the composition is skewed to low complexity. Residues 437–464 (TSPQSLPQTPTTPTAPVTPITQGPSVIT) are disordered. The fork-head DNA-binding region spans 503–593 (RPPFTYATLI…SQKITGSPTL (91 aa)). Disordered stretches follow at residues 648 to 667 (LDHIDSNGNSSPGCSPQPHI) and 677 to 714 (VIAEDEDCPMSLVTTANHSPELEDDREIEEEPLSEDLE). The span at 698 to 714 (LEDDREIEEEPLSEDLE) shows a compositional bias: acidic residues.

In terms of assembly, forms homodimers and heterodimers with FOXP1 and FOXP4. Dimerization is required for DNA-binding. Interacts with CTBP1. Interacts with FOXP1. Interacts with TBR1. Interacts with ZMYM2.

It is found in the nucleus. Functionally, transcriptional repressor that may play a role in the specification and differentiation of lung epithelium. May also play a role in developing neural, gastrointestinal and cardiovascular tissues. Can act with CTBP1 to synergistically repress transcription but CTPBP1 is not essential. Plays a role in synapse formation by regulating SRPX2 levels. This Macaca mulatta (Rhesus macaque) protein is Forkhead box protein P2 (FOXP2).